Reading from the N-terminus, the 310-residue chain is TLC domain-containing protein 2 (310 aa).

6 consecutive transmembrane segments (helical) span residues 6 to 26 (LLVA…LQLL), 40 to 60 (NIFV…VGLW), 79 to 99 (VLVA…LWNQ), 117 to 137 (CLST…SLLL), 167 to 187 (ASLA…SLWL), and 194 to 214 (LSLA…SISI). Residues 33–227 (RDRWMWRNIF…IRILTKDILQ (195 aa)) form the TLC domain.

This sequence belongs to the TLCD family.

The protein localises to the cell membrane. In terms of biological role, regulates the composition and fluidity of the plasma membrane. Inhibits the incorporation of membrane-fluidizing phospholipids containing omega-3 long-chain polyunsaturated fatty acids (LCPUFA) and thereby promotes membrane rigidity. Does not appear to have any effect on LCPUFA synthesis. The polypeptide is TLC domain-containing protein 2 (Tlcd2) (Mus musculus (Mouse)).